Consider the following 343-residue polypeptide: Ricin B-like lectin R40G2 (343 aa).

A Ricin B-type lectin domain is found at 194–340; that stretch reads TVRVFSAAGE…CEGDNQRWKI (147 aa).

Lectin which binds carbohydrates in vitro. Interacts through its lectin domain with glycan structures containing specific motifs. The sequence is that of Ricin B-like lectin R40G2 from Oryza sativa subsp. japonica (Rice).